Consider the following 136-residue polypeptide: UPF0310 protein HH_1062 (136 aa).

Belongs to the UPF0310 family.

This chain is UPF0310 protein HH_1062, found in Helicobacter hepaticus (strain ATCC 51449 / 3B1).